Reading from the N-terminus, the 195-residue chain is Cysteine/O-acetylserine efflux protein (195 aa).

Over 1-9 (MTPILLSAF) the chain is Periplasmic. Residues 10–32 (WTYTLITAMTPGPNNILALSSAT) traverse the membrane as a helical segment. The Cytoplasmic portion of the chain corresponds to 33 to 46 (SHGFRQSTRVLAGM). Residues 47-67 (SLGFLIVMLLCAGISFSLAVI) form a helical membrane-spanning segment. At 68–69 (DP) the chain is on the periplasmic side. The chain crosses the membrane as a helical span at residues 70–90 (AAVHLLSWAGAAYIVWLAWKI). Topologically, residues 91 to 104 (ATSPTKEDGLQAKP) are cytoplasmic. The chain crosses the membrane as a helical span at residues 105–125 (ISFWASFALQFVNVKIILYGV). At 126 to 141 (TALSTFVLPQTQALSW) the chain is on the periplasmic side. The chain crosses the membrane as a helical span at residues 142-162 (VVGVSVLLAMIGTFGNVCWAL). The Cytoplasmic segment spans residues 163–176 (AGHLFQRLFRQYGR). A helical membrane pass occupies residues 177–194 (QLNIVLALLLVYCAVRIF). Residue Tyr-195 is a topological domain, periplasmic.

It belongs to the Rht family.

Its subcellular location is the cell inner membrane. It catalyses the reaction O-acetyl-L-serine(in) = O-acetyl-L-serine(out). The enzyme catalyses L-cysteine(in) = L-cysteine(out). Functionally, exporter of O-acetylserine (OAS) and cysteine. This is Cysteine/O-acetylserine efflux protein (eamB) from Shigella flexneri serotype 5b (strain 8401).